The chain runs to 395 residues: MASVEEIRKAQRAHGPATVLAIGTATPSNCITQADYPDYYFRITKSDHMTELKEKFKRMCDKSMIKKRYMYLNEEILNENPNMCAYMAPSLDARQTIVVVEVPKLGKEAATKAIKEWGQPKSKITHLVFCTTSGVDMPGADYQLTKLLGLRPSVKRLMMYQQGCFAGGTVLRLAKDLAENNKGARVLVVCSEITAVTFRGPTDTHLDSLVGQALFGDGAAAVIVGADPDTSVERPLFELISAAQTILPDSDGAIDGHLREVGLTFHLLKDVPGIISKNIEKSLAEAFAPLGISDWNSLFWIAHPGGPAILDQVESKLGLKEEKLRATRHVLSEYGNMSSACVLFILDEMRRNSLEGGKVTTGEGLEWGVLFGFGPGLTVETVVLHSVPVPVEASH.

Cys164 is an active-site residue.

It belongs to the thiolase-like superfamily. Chalcone/stilbene synthases family.

It carries out the reaction (E)-4-coumaroyl-CoA + 3 malonyl-CoA + 3 H(+) = 2',4,4',6'-tetrahydroxychalcone + 3 CO2 + 4 CoA. Its pathway is secondary metabolite biosynthesis; flavonoid biosynthesis. The primary product of this enzyme is 4,2',4',6'-tetrahydroxychalcone (also termed naringenin-chalcone or chalcone) which can under specific conditions spontaneously isomerize into naringenin. This chain is Chalcone synthase (CHS), found in Betula pendula (European white birch).